Consider the following 248-residue polypeptide: Probable phosphatase Sfri_3709 (248 aa).

Zn(2+) is bound by residues histidine 8, histidine 10, histidine 16, histidine 41, glutamate 74, histidine 102, histidine 132, aspartate 193, and histidine 195.

Belongs to the PHP family. It depends on Zn(2+) as a cofactor.

The protein is Probable phosphatase Sfri_3709 of Shewanella frigidimarina (strain NCIMB 400).